The sequence spans 478 residues: Cytochrome c-552 (478 aa).

The N-terminal stretch at 1 to 26 (MTRIKINARRIFSLLIPFFFFTSVHA) is a signal peptide. Histidine 94 contacts heme c. Positions 122, 125, and 126 each coordinate heme. Positions 160, 163, 164, 209, 212, and 213 each coordinate heme c. The Ca(2+) site is built by glutamate 215, tyrosine 216, lysine 261, and glutamine 263. Tyrosine 216 contributes to the substrate binding site. Histidine 264 is a substrate binding site. Heme c-binding residues include histidine 275, cysteine 282, cysteine 285, histidine 286, histidine 301, cysteine 314, cysteine 317, histidine 318, and histidine 393.

This sequence belongs to the cytochrome c-552 family. The cofactor is Ca(2+). It depends on heme c as a cofactor.

The protein resides in the periplasm. It catalyses the reaction 6 Fe(III)-[cytochrome c] + NH4(+) + 2 H2O = 6 Fe(II)-[cytochrome c] + nitrite + 8 H(+). It functions in the pathway nitrogen metabolism; nitrate reduction (assimilation). Its function is as follows. Catalyzes the reduction of nitrite to ammonia, consuming six electrons in the process. This Escherichia coli O157:H7 (strain EC4115 / EHEC) protein is Cytochrome c-552.